A 357-amino-acid polypeptide reads, in one-letter code: Eugenol O-methyltransferase (357 aa).

Residues Gly203, Asp226, Asp246, Met247, and Lys260 each coordinate S-adenosyl-L-methionine. His264 acts as the Proton acceptor in catalysis.

Belongs to the class I-like SAM-binding methyltransferase superfamily. Cation-independent O-methyltransferase family. COMT subfamily. As to expression, specifically expressed in the peltate glandular trichomes on the surface of the young basil leaves.

It catalyses the reaction (E)-isoeugenol + S-adenosyl-L-methionine = (E)-isomethyleugenol + S-adenosyl-L-homocysteine + H(+). It participates in aromatic compound metabolism; phenylpropanoid biosynthesis. Its function is as follows. Phenylpropene O-methyltransferase that catalyzes the methylation of the para-4-hydroxyl of eugenol to methyleugenol. Can also convert chavicol to methylchavicol but with less affinity. This Ocimum basilicum (Sweet basil) protein is Eugenol O-methyltransferase (EOMT1).